The following is a 1296-amino-acid chain: Phosphoribosylformylglycinamidine synthase (1296 aa).

A disordered region spans residues 304 to 323; sequence WPGAATGSGGEIRDEGATGR. Residues 306-317 and alanine 677 each bind ATP; that span reads GAATGSGGEIRD. Aspartate 678, glutamate 717, asparagine 721, and aspartate 885 together coordinate Mg(2+). Serine 887 is an ATP binding site. Residues 1000–1013 are compositionally biased toward basic and acidic residues; that stretch reads PDCADQEHQAKQDE. Residues 1000-1019 are disordered; it reads PDCADQEHQAKQDESDPGLN. A Glutamine amidotransferase type-1 domain is found at 1043–1296; that stretch reads VAVLREQGVN…MFRNARKQLG (254 aa). Cysteine 1136 serves as the catalytic Nucleophile. Catalysis depends on residues histidine 1261 and glutamate 1263.

This sequence in the N-terminal section; belongs to the FGAMS family. In terms of assembly, monomer.

The protein localises to the cytoplasm. It carries out the reaction N(2)-formyl-N(1)-(5-phospho-beta-D-ribosyl)glycinamide + L-glutamine + ATP + H2O = 2-formamido-N(1)-(5-O-phospho-beta-D-ribosyl)acetamidine + L-glutamate + ADP + phosphate + H(+). It participates in purine metabolism; IMP biosynthesis via de novo pathway; 5-amino-1-(5-phospho-D-ribosyl)imidazole from N(2)-formyl-N(1)-(5-phospho-D-ribosyl)glycinamide: step 1/2. In terms of biological role, phosphoribosylformylglycinamidine synthase involved in the purines biosynthetic pathway. Catalyzes the ATP-dependent conversion of formylglycinamide ribonucleotide (FGAR) and glutamine to yield formylglycinamidine ribonucleotide (FGAM) and glutamate. This chain is Phosphoribosylformylglycinamidine synthase, found in Yersinia pseudotuberculosis serotype I (strain IP32953).